The following is a 662-amino-acid chain: F-box/WD repeat-containing protein pof10 (662 aa).

Over residues 1–16 (MKSEPTSLDFTSSNLR) the composition is skewed to polar residues. The disordered stretch occupies residues 1-27 (MKSEPTSLDFTSSNLRRMNRDHSSNNT). The region spanning 28–74 (NRTVLNLPKEILIIIFSFLDPRSLLSAQCTCKYWKKLLSDDLSWRTA) is the F-box domain. WD repeat units follow at residues 215 to 260 (SHAD…SLQS), 263 to 302 (FRSS…GYAR), and 429 to 468 (TAYS…FLKK). Residues 581-600 (SEEEIIAYVTMLSQEEEAKR) enclose the UIM 1 domain. The segment at 617–645 (ENDEQATSSLNALSSNHEPPQEQANVAEL) is disordered. Polar residues predominate over residues 621–640 (QATSSLNALSSNHEPPQEQA). The 17-residue stretch at 646–662 (NEQEQIELAMRLSLMEM) folds into the UIM 2 domain.

As to quaternary structure, part of a SCF (SKP1-cullin-F-box) protein ligase complex. Interacts with skp1.

The protein localises to the cytoplasm. Functionally, probably recognizes and binds to some phosphorylated proteins and promotes their ubiquitination and degradation. This chain is F-box/WD repeat-containing protein pof10 (pof10), found in Schizosaccharomyces pombe (strain 972 / ATCC 24843) (Fission yeast).